A 530-amino-acid polypeptide reads, in one-letter code: Ubiquitin carboxyl-terminal hydrolase 17 (530 aa).

The 296-residue stretch at Ala80 to Lys375 folds into the USP domain. The active-site Nucleophile is Cys89. His334 (proton acceptor) is an active-site residue. Basic and acidic residues-rich tracts occupy residues Ser382–Arg392 and Asp398–Pro413. 2 disordered regions span residues Ser382–Gln416 and Ser490–Gln530. Residues Thr399–Gln530 are mediates interaction with SUDS3. Polar residues predominate over residues Glu498–Gly510. Positions Arg511–Arg524 are enriched in basic residues.

The protein belongs to the peptidase C19 family. USP17 subfamily. As to quaternary structure, interacts with SUDS3; the interaction is direct. Broadly expressed.

It localises to the nucleus. The protein localises to the endoplasmic reticulum. It carries out the reaction Thiol-dependent hydrolysis of ester, thioester, amide, peptide and isopeptide bonds formed by the C-terminal Gly of ubiquitin (a 76-residue protein attached to proteins as an intracellular targeting signal).. In terms of biological role, deubiquitinating enzyme that removes conjugated ubiquitin from specific proteins to regulate different cellular processes. Regulates cell proliferation by deubiquitinating and inhibiting RCE1 thereby controlling the small GTPases NRAS and HRAS localization and activation. In parallel, mediates deubiquitination of CDC25A, preventing CDC25A degradation by the proteasome during the G1/S and G2/M phases promoting cell-cycle progression. Also regulates cell proliferation and apoptosis through deubiquitination of SUDS3 a regulator of histone deacetylation. Through activation of the Rho family GTPases RAC1A, CDC42 and RHOA, regulates cell migration. Through the cleavage of 'Lys-48'- and 'Lys-63'-linked polyubiquitin chains of the cytoplasmic innate immune receptors RIGI and IFIH1 stimulates the cellular response to viral infection. This chain is Ubiquitin carboxyl-terminal hydrolase 17 (USP17L2), found in Homo sapiens (Human).